A 541-amino-acid chain; its full sequence is Neutral amino acid transporter B(0) (541 aa).

The residue at position 1 (M1) is an N-acetylmethionine. Over M1–A51 the chain is Cytoplasmic. Residues N52–L81 traverse the membrane as a helical segment. Over G82–E94 the chain is Extracellular. A helical transmembrane segment spans residues L95–A116. Over A117 to W130 the chain is Cytoplasmic. A helical membrane pass occupies residues A131–L153. Residues Q154 to Q224 are Extracellular-facing. 2 N-linked (GlcNAc...) asparagine glycosylation sites follow: N163 and N212. A helical membrane pass occupies residues E225–L248. Residues G249–R257 are Cytoplasmic-facing. The helical transmembrane segment at F258–V285 threads the bilayer. Topologically, residues A286–I306 are extracellular. The helical transmembrane segment at L307–F328 threads the bilayer. At T329–P333 the chain is on the cytoplasmic side. The segment at residues Y334–V364 is an intramembrane region (discontinuously helical). Over E365–H373 the chain is Cytoplasmic. A helical membrane pass occupies residues I374–F400. The Na(+) site is built by G382, T384, and N386. The Extracellular portion of the chain corresponds to I401–K413. An intramembrane region (discontinuously helical) is located at residues I414–N447. The Extracellular segment spans residues L448–D460. The helical transmembrane segment at W461–L482 threads the bilayer. Na(+)-binding residues include N471 and D475. At Q483 to M541 the chain is on the cytoplasmic side. S493 carries the phosphoserine modification. Residue T494 is modified to Phosphothreonine. Phosphoserine is present on residues S503, S535, and S539. The tract at residues P511 to M541 is disordered.

It belongs to the dicarboxylate/amino acid:cation symporter (DAACS) (TC 2.A.23) family. SLC1A5 subfamily. In terms of assembly, homotrimer. Interacts with ERVH48-1/suppressyn; may negatively regulate syncytialization. In terms of tissue distribution, placenta, lung, skeletal muscle, kidney, pancreas, and intestine. Expressed in CD34-positive hematopoietic progenitors (at protein level).

The protein resides in the cell membrane. Its subcellular location is the melanosome. The catalysed reaction is L-glutamine(out) + L-serine(in) + Na(+)(out) = L-glutamine(in) + L-serine(out) + Na(+)(in). It catalyses the reaction L-glutamine(in) + L-serine(out) + Na(+)(out) = L-glutamine(out) + L-serine(in) + Na(+)(in). The enzyme catalyses L-threonine(in) + L-glutamine(out) + Na(+)(out) = L-threonine(out) + L-glutamine(in) + Na(+)(in). It carries out the reaction L-threonine(out) + L-glutamine(in) + Na(+)(out) = L-threonine(in) + L-glutamine(out) + Na(+)(in). The catalysed reaction is L-asparagine(in) + L-glutamine(out) + Na(+)(out) = L-asparagine(out) + L-glutamine(in) + Na(+)(in). It catalyses the reaction L-asparagine(out) + L-glutamine(in) + Na(+)(out) = L-asparagine(in) + L-glutamine(out) + Na(+)(in). The enzyme catalyses L-glutamine(in) + L-alanine(out) + Na(+)(out) = L-glutamine(out) + L-alanine(in) + Na(+)(in). It carries out the reaction L-valine(out) + L-glutamine(in) + Na(+)(out) = L-valine(in) + L-glutamine(out) + Na(+)(in). The catalysed reaction is L-glutamine(in) + L-methionine(out) + Na(+)(out) = L-glutamine(out) + L-methionine(in) + Na(+)(in). It catalyses the reaction L-glutamine(in) + L-glutamate(out) + Na(+)(out) + H(+)(out) = L-glutamine(out) + L-glutamate(in) + Na(+)(in) + H(+)(in). The enzyme catalyses D-serine(in) + L-glutamine(out) + Na(+)(out) = D-serine(out) + L-glutamine(in) + Na(+)(in). It carries out the reaction D-serine(in) + L-alanine(out) + Na(+)(out) = D-serine(out) + L-alanine(in) + Na(+)(in). The catalysed reaction is nitrate(in) = nitrate(out). It catalyses the reaction iodide(out) = iodide(in). The enzyme catalyses thiocyanate(in) = thiocyanate(out). With respect to regulation, regulated by L-cysteine, which can either inhibit substrate influx or trigger substrate efflux without being transported itself. Its function is as follows. Sodium-coupled antiporter of neutral amino acids. In a tri-substrate transport cycle, exchanges neutral amino acids between the extracellular and intracellular compartments, coupled to the inward cotransport of at least one sodium ion. The preferred substrate is the essential amino acid L-glutamine, a precursor for biosynthesis of proteins, nucleotides and amine sugars as well as an alternative fuel for mitochondrial oxidative phosphorylation. Exchanges L-glutamine with other neutral amino acids such as L-serine, L-threonine and L-asparagine in a bidirectional way. Provides L-glutamine to proliferating stem and activated cells driving the metabolic switch toward cell differentiation. The transport cycle is usually pH-independent, with the exception of L-glutamate. Transports extracellular L-glutamate coupled to the cotransport of one proton and one sodium ion in exchange for intracellular L-glutamine counter-ion. May provide for L-glutamate uptake in glial cells regulating glutamine/glutamate cycle in the nervous system. Can transport D-amino acids. Mediates D-serine release from the retinal glia potentially affecting NMDA receptor function in retinal neurons. Displays sodium- and amino acid-dependent but uncoupled channel-like anion conductance with a preference SCN(-) &gt;&gt; NO3(-) &gt; I(-) &gt; Cl(-). Through binding of the fusogenic protein syncytin-1/ERVW-1 may mediate trophoblasts syncytialization, the spontaneous fusion of their plasma membranes, an essential process in placental development. (Microbial infection) Acts as a cell surface receptor for Feline endogenous virus RD114. Functionally, (Microbial infection) Acts as a cell surface receptor for Baboon M7 endogenous virus. In terms of biological role, (Microbial infection) Acts as a cell surface receptor for type D simian retroviruses. The protein is Neutral amino acid transporter B(0) of Homo sapiens (Human).